A 297-amino-acid polypeptide reads, in one-letter code: Quinate/shikimate dehydrogenase (297 aa).

Lys80 and Asp116 together coordinate substrate. NAD(+)-binding positions include 141 to 144 (AGGA), 164 to 167 (NRRD), Lys214, 241 to 244 (CVYN), and Gly264.

Belongs to the shikimate dehydrogenase family. As to quaternary structure, homodimer.

The enzyme catalyses L-quinate + NAD(+) = 3-dehydroquinate + NADH + H(+). It catalyses the reaction L-quinate + NADP(+) = 3-dehydroquinate + NADPH + H(+). The catalysed reaction is shikimate + NADP(+) = 3-dehydroshikimate + NADPH + H(+). It carries out the reaction shikimate + NAD(+) = 3-dehydroshikimate + NADH + H(+). The protein operates within metabolic intermediate biosynthesis; chorismate biosynthesis; chorismate from D-erythrose 4-phosphate and phosphoenolpyruvate: step 4/7. Its function is as follows. The actual biological function of YdiB remains unclear, nor is it known whether 3-dehydroshikimate or quinate represents the natural substrate. Catalyzes the reversible NAD-dependent reduction of both 3-dehydroshikimate (DHSA) and 3-dehydroquinate to yield shikimate (SA) and quinate, respectively. It can use both NAD or NADP for catalysis, however it has higher catalytic efficiency with NAD. This Shigella dysenteriae serotype 1 (strain Sd197) protein is Quinate/shikimate dehydrogenase.